The chain runs to 465 residues: Adenosylhomocysteinase (465 aa).

Substrate contacts are provided by T56, D131, and E191. 192–194 (TTT) is a binding site for NAD(+). Residues K221 and D225 each contribute to the substrate site. Residues N226, 255–260 (GYGNVG), E278, N313, 334–336 (IGH), and N379 each bind NAD(+).

Belongs to the adenosylhomocysteinase family. Requires NAD(+) as cofactor.

It is found in the cytoplasm. The enzyme catalyses S-adenosyl-L-homocysteine + H2O = L-homocysteine + adenosine. Its pathway is amino-acid biosynthesis; L-homocysteine biosynthesis; L-homocysteine from S-adenosyl-L-homocysteine: step 1/1. In terms of biological role, may play a key role in the regulation of the intracellular concentration of adenosylhomocysteine. This Bartonella quintana (strain Toulouse) (Rochalimaea quintana) protein is Adenosylhomocysteinase.